A 673-amino-acid polypeptide reads, in one-letter code: Probable multidrug resistance ABC transporter ATP-binding/permease protein YheH (673 aa).

Helical transmembrane passes span 18 to 38, 146 to 166, 223 to 243, 245 to 265, and 347 to 367; these read LITA…GPFI, IKGM…SVFF, LYVT…GIFT, LFLL…IIWL, and LAFV…AGIV. The 381-residue stretch at 18-398 folds into the ABC transmembrane type-1 domain; sequence LITAVLLLTV…IVNQFSKLEL (381 aa). Residues 430–664 enclose the ABC transporter domain; the sequence is VEFRDVSFAY…EGQYYQMYEL (235 aa). 463–470 contributes to the ATP binding site; sequence GHTGSGKS.

It belongs to the ABC transporter superfamily. In terms of assembly, heterodimer composed of YheH and YheI.

It localises to the cell membrane. With respect to regulation, inhibited by ortho-vanadate. In terms of biological role, involved in the transport of four structurally unrelated drugs, including doxorubicin and mitoxantrone. Transmembrane domains (TMD) form a pore in the membrane and the ATP-binding domain (NBD) is responsible for energy generation. In Bacillus subtilis (strain 168), this protein is Probable multidrug resistance ABC transporter ATP-binding/permease protein YheH (yheH).